A 454-amino-acid chain; its full sequence is tRNA modification GTPase MnmE (454 aa).

(6S)-5-formyl-5,6,7,8-tetrahydrofolate contacts are provided by Arg23, Glu80, and Lys120. The TrmE-type G domain occupies 216-377; the sequence is GMKVVIAGRP…LRDHLKQSMG (162 aa). Asn226 contacts K(+). GTP contacts are provided by residues 226–231, 245–251, 270–273, 335–338, and 358–360; these read NAGKSS, TDIAGTT, DTAG, NKAD, and SAR. Ser230 is a Mg(2+) binding site. 3 residues coordinate K(+): Thr245, Ile247, and Thr250. Residue Thr251 coordinates Mg(2+). Lys454 is a (6S)-5-formyl-5,6,7,8-tetrahydrofolate binding site.

The protein belongs to the TRAFAC class TrmE-Era-EngA-EngB-Septin-like GTPase superfamily. TrmE GTPase family. As to quaternary structure, homodimer. Heterotetramer of two MnmE and two MnmG subunits. K(+) is required as a cofactor.

The protein resides in the cytoplasm. Exhibits a very high intrinsic GTPase hydrolysis rate. Involved in the addition of a carboxymethylaminomethyl (cmnm) group at the wobble position (U34) of certain tRNAs, forming tRNA-cmnm(5)s(2)U34. In Yersinia pseudotuberculosis serotype IB (strain PB1/+), this protein is tRNA modification GTPase MnmE.